The primary structure comprises 87 residues: Large ribosomal subunit protein bL27 (87 aa).

The protein belongs to the bacterial ribosomal protein bL27 family.

The polypeptide is Large ribosomal subunit protein bL27 (Dichelobacter nodosus (strain VCS1703A)).